Consider the following 361-residue polypeptide: Phospho-N-acetylmuramoyl-pentapeptide-transferase (361 aa).

Helical transmembrane passes span 28–48, 74–94, 99–119, 133–153, 168–188, 203–223, 236–256, 263–283, 288–308, and 338–358; these read LAII…IEFL, TMGG…LADL, IWIT…DDYA, SKLL…EYLD, LSLD…VGSS, VPIA…GNLI, TGEL…FLWF, VFMG…ISVI, IVLA…ILQV, and KVVI…LSSL.

The protein belongs to the glycosyltransferase 4 family. MraY subfamily. Mg(2+) serves as cofactor.

The protein localises to the cell membrane. It carries out the reaction UDP-N-acetyl-alpha-D-muramoyl-L-alanyl-gamma-D-glutamyl-meso-2,6-diaminopimeloyl-D-alanyl-D-alanine + di-trans,octa-cis-undecaprenyl phosphate = di-trans,octa-cis-undecaprenyl diphospho-N-acetyl-alpha-D-muramoyl-L-alanyl-D-glutamyl-meso-2,6-diaminopimeloyl-D-alanyl-D-alanine + UMP. Its pathway is cell wall biogenesis; peptidoglycan biosynthesis. Its function is as follows. Catalyzes the initial step of the lipid cycle reactions in the biosynthesis of the cell wall peptidoglycan: transfers peptidoglycan precursor phospho-MurNAc-pentapeptide from UDP-MurNAc-pentapeptide onto the lipid carrier undecaprenyl phosphate, yielding undecaprenyl-pyrophosphoryl-MurNAc-pentapeptide, known as lipid I. The polypeptide is Phospho-N-acetylmuramoyl-pentapeptide-transferase (Rickettsia rickettsii).